The chain runs to 145 residues: Large ribosomal subunit protein uL15 (145 aa).

Basic residues-rich tracts occupy residues 1–13 (MVRE…RGGH) and 19–29 (KAGRGKGKKGG). The tract at residues 1–33 (MVRERTKKLRGGHYGRGMKAGRGKGKKGGRGNA) is disordered.

The protein belongs to the universal ribosomal protein uL15 family. In terms of assembly, part of the 50S ribosomal subunit.

In terms of biological role, binds to the 23S rRNA. The polypeptide is Large ribosomal subunit protein uL15 (Thermoplasma volcanium (strain ATCC 51530 / DSM 4299 / JCM 9571 / NBRC 15438 / GSS1)).